The sequence spans 142 residues: Small ribosomal subunit protein bS16 (142 aa).

Residues 101–142 (RPSFDALGGDDAGKGEAITQKKKAEKKDEAAAESSSSESTEA) form a disordered region. The span at 132 to 142 (AESSSSESTEA) shows a compositional bias: low complexity.

Belongs to the bacterial ribosomal protein bS16 family.

This is Small ribosomal subunit protein bS16 from Streptomyces avermitilis (strain ATCC 31267 / DSM 46492 / JCM 5070 / NBRC 14893 / NCIMB 12804 / NRRL 8165 / MA-4680).